The chain runs to 435 residues: MGKQEVRTRSGERVAIVAGLRTPFARQSTEFGQVPAVDLGKMVVQEMMARTAIDPKLIEQVVFGQVVQMPEAPNIAREIVLGTGMSINTDAYSVTRACATSFQAAVNVAESIMAGSIDIGIAGGADSSSVLPIGVSKKLAASLLALSKTKTVGQKLKLLSNLSFKDLMPVPPAVAEYSTGLSMGQTAEQMAKSYAISRAEQDALAHRSHTLAAQAWTEGKIRDEVMTAFPEPYKKWLDMDNNIRMDSKLESYAKLRPAFDRQYGSVTAANSTPLTDGAAAIMLMREGKAKELGLEIMGYIRSYAFAAIGVEKDMLMGPSYATPIALDRAGITLNDLTLIDMHEAFAAQTLANLKMFASDKFAQEQLGRAQAIGEVDMSKFNVLGGSLAYGHPFAATGARMITQTLRELKRRGGGLALNTACAAGGLGAAMILEVE.

Cysteine 98 serves as the catalytic Acyl-thioester intermediate. Active-site proton acceptor residues include histidine 391 and cysteine 421.

Belongs to the thiolase-like superfamily. Thiolase family. As to quaternary structure, heterotetramer of two alpha chains (FadJ) and two beta chains (FadI).

The protein localises to the cytoplasm. The enzyme catalyses an acyl-CoA + acetyl-CoA = a 3-oxoacyl-CoA + CoA. Its pathway is lipid metabolism; fatty acid beta-oxidation. Its function is as follows. Catalyzes the final step of fatty acid oxidation in which acetyl-CoA is released and the CoA ester of a fatty acid two carbons shorter is formed. The chain is 3-ketoacyl-CoA thiolase from Vibrio cholerae serotype O1 (strain ATCC 39541 / Classical Ogawa 395 / O395).